A 408-amino-acid chain; its full sequence is Acetylornithine/succinyldiaminopimelate aminotransferase (408 aa).

Residues 108–109 (GA) and Phe-141 contribute to the pyridoxal 5'-phosphate site. Residue Arg-144 participates in N(2)-acetyl-L-ornithine binding. 226 to 229 (DEIQ) is a pyridoxal 5'-phosphate binding site. Lys-255 bears the N6-(pyridoxal phosphate)lysine mark. Residue Thr-283 participates in N(2)-acetyl-L-ornithine binding. Thr-284 contributes to the pyridoxal 5'-phosphate binding site.

Belongs to the class-III pyridoxal-phosphate-dependent aminotransferase family. ArgD subfamily. In terms of assembly, homodimer. It depends on pyridoxal 5'-phosphate as a cofactor.

Its subcellular location is the cytoplasm. The catalysed reaction is N(2)-acetyl-L-ornithine + 2-oxoglutarate = N-acetyl-L-glutamate 5-semialdehyde + L-glutamate. It carries out the reaction N-succinyl-(2S,6S)-2,6-diaminopimelate + 2-oxoglutarate = (S)-2-succinylamino-6-oxoheptanedioate + L-glutamate. It functions in the pathway amino-acid biosynthesis; L-arginine biosynthesis; N(2)-acetyl-L-ornithine from L-glutamate: step 4/4. Its pathway is amino-acid biosynthesis; L-lysine biosynthesis via DAP pathway; LL-2,6-diaminopimelate from (S)-tetrahydrodipicolinate (succinylase route): step 2/3. Its function is as follows. Involved in both the arginine and lysine biosynthetic pathways. The chain is Acetylornithine/succinyldiaminopimelate aminotransferase from Buchnera aphidicola subsp. Acyrthosiphon pisum (strain APS) (Acyrthosiphon pisum symbiotic bacterium).